Consider the following 403-residue polypeptide: SH3 and cysteine-rich domain-containing protein (403 aa).

The segment at 1 to 51 is disordered; the sequence is MIPPSGAREDSGDGLTGEATGTEQPPSPASTSSLESKLQKLKRSLSFKTKS. Positions 19-36 are enriched in polar residues; sequence ATGTEQPPSPASTSSLES. A compositionally biased stretch (basic residues) spans 39–51; the sequence is QKLKRSLSFKTKS. A Phorbol-ester/DAG-type zinc finger spans residues 108–160; the sequence is LHAFQEHVFKKPTFCDVCNHMIVGTHAKHGLRCGACKMSIHHKCADGLAPQRC. A disordered region spans residues 212–264; sequence QRTKKGGSGSGSDSPPRTSTSELVDVPEEADGPGDGSDMRTRSNSVFTYPENG. A compositionally biased stretch (low complexity) spans 222-232; the sequence is GSDSPPRTSTS. 2 SH3 domains span residues 286–345 and 348–403; these read LQMN…RVEE and KIYR…LVDV.

Interacts (via SH3 domains) with CACNA1S. Interacts with CACNA1H. Interacts with CACNA1C. Expressed predominantly in brain Detected in brain neurons, more specifically in hippocampus, cerebellum and inferior olive. Highly expressed in urinary bladder, and detected at lower levels in adrenal gland. Detected at very low levels in heart, liver, lung and kidney.

The protein resides in the cytoplasm. Its subcellular location is the cytosol. It is found in the cell membrane. The protein localises to the sarcolemma. Its function is as follows. Promotes expression of the ion channel CACNA1H at the cell membrane, and thereby contributes to the regulation of channel activity. Plays a minor and redundant role in promoting the expression of calcium channel CACNA1S at the cell membrane, and thereby contributes to increased channel activity. Slows the rate of calcium-mediated inactivation of CACNA1C calcium channel activity. In Mus musculus (Mouse), this protein is SH3 and cysteine-rich domain-containing protein.